The sequence spans 161 residues: Nucleotide-binding protein xcc-b100_3818 (161 aa).

This sequence belongs to the YajQ family.

Nucleotide-binding protein. The chain is Nucleotide-binding protein xcc-b100_3818 from Xanthomonas campestris pv. campestris (strain B100).